Here is a 149-residue protein sequence, read N- to C-terminus: Probable glycine cleavage system H protein 2 (149 aa).

The Lipoyl-binding domain maps to 32 to 114 (IAVVGITDLA…YGQGWIAKIK (83 aa)). N6-lipoyllysine is present on lysine 73.

This sequence belongs to the GcvH family. In terms of assembly, the glycine cleavage system is composed of four proteins: P, T, L and H. The cofactor is (R)-lipoate.

The glycine cleavage system catalyzes the degradation of glycine. The H protein shuttles the methylamine group of glycine from the P protein to the T protein. The sequence is that of Probable glycine cleavage system H protein 2 from Sulfolobus acidocaldarius (strain ATCC 33909 / DSM 639 / JCM 8929 / NBRC 15157 / NCIMB 11770).